We begin with the raw amino-acid sequence, 77 residues long: U8-lycotoxin-Ls1n (77 aa).

The first 20 residues, 1–20 (MKLMIFTGLVLFAIVSLIEA), serve as a signal peptide directing secretion. Positions 21 to 26 (QAENEK) are excised as a propeptide.

Belongs to the neurotoxin 19 (CSTX) family. 08 (U8-Lctx) subfamily. Post-translationally, contains 4 disulfide bonds. Expressed by the venom gland.

The protein localises to the secreted. This Lycosa singoriensis (Wolf spider) protein is U8-lycotoxin-Ls1n.